The primary structure comprises 292 residues: MSIWAIGDLQGCYDATQRLLENIRFDPSQDTLWFCGDLVNRGGQSLETLRLVYSLRSHSVVVLGNHDLSLLAIAVRSEEEQRKVNPDLLRIITAEDRDEILTWLRMQKLIHVDRTIGWMMVHAGLAPKWTTQMAEKLAHEVEQQLHGADYRNLLHSMYGDKPEWSPALSGCNRSRAIINVLTRMRYCTPRGRISTEDKGTPGTQTQGMYPWFEVPGRVERDLKIVCGHWSTLGLTITQGIHAIDTGAVWGGKLTALQIDTDELRLAQVHGLSIEHPRHTHTPRRQAKKHSKK.

The segment at 271-292 (LSIEHPRHTHTPRRQAKKHSKK) is disordered. Positions 277-292 (RHTHTPRRQAKKHSKK) are enriched in basic residues.

It belongs to the Ap4A hydrolase family.

The catalysed reaction is P(1),P(4)-bis(5'-adenosyl) tetraphosphate + H2O = 2 ADP + 2 H(+). In terms of biological role, hydrolyzes diadenosine 5',5'''-P1,P4-tetraphosphate to yield ADP. This Xylella fastidiosa (strain 9a5c) protein is Bis(5'-nucleosyl)-tetraphosphatase, symmetrical (apaH).